We begin with the raw amino-acid sequence, 512 residues long: Histidine ammonia-lyase (512 aa).

A cross-link (5-imidazolinone (Ala-Gly)) is located at residues 146–148; it reads ASG. At S147 the chain carries 2,3-didehydroalanine (Ser).

It belongs to the PAL/histidase family. Contains an active site 4-methylidene-imidazol-5-one (MIO), which is formed autocatalytically by cyclization and dehydration of residues Ala-Ser-Gly.

The protein resides in the cytoplasm. The enzyme catalyses L-histidine = trans-urocanate + NH4(+). The protein operates within amino-acid degradation; L-histidine degradation into L-glutamate; N-formimidoyl-L-glutamate from L-histidine: step 1/3. This chain is Histidine ammonia-lyase, found in Paracidovorax citrulli (strain AAC00-1) (Acidovorax citrulli).